We begin with the raw amino-acid sequence, 479 residues long: UDP-N-acetylmuramate--L-alanine ligase (479 aa).

126–132 (GTHGKTT) is an ATP binding site.

The protein belongs to the MurCDEF family.

The protein resides in the cytoplasm. It carries out the reaction UDP-N-acetyl-alpha-D-muramate + L-alanine + ATP = UDP-N-acetyl-alpha-D-muramoyl-L-alanine + ADP + phosphate + H(+). It functions in the pathway cell wall biogenesis; peptidoglycan biosynthesis. Functionally, cell wall formation. This is UDP-N-acetylmuramate--L-alanine ligase from Alkalilimnicola ehrlichii (strain ATCC BAA-1101 / DSM 17681 / MLHE-1).